A 71-amino-acid chain; its full sequence is Small ribosomal subunit protein bS21 (71 aa).

It belongs to the bacterial ribosomal protein bS21 family.

The protein is Small ribosomal subunit protein bS21 of Hahella chejuensis (strain KCTC 2396).